The chain runs to 118 residues: Large ribosomal subunit protein bL20 (118 aa).

The protein belongs to the bacterial ribosomal protein bL20 family.

Binds directly to 23S ribosomal RNA and is necessary for the in vitro assembly process of the 50S ribosomal subunit. It is not involved in the protein synthesizing functions of that subunit. This Lactobacillus delbrueckii subsp. bulgaricus (strain ATCC BAA-365 / Lb-18) protein is Large ribosomal subunit protein bL20.